The following is a 317-amino-acid chain: Melanocyte-stimulating hormone receptor (317 aa).

Over 1 to 37 (MPVQGSQRRLLGSLNSTPTATPHLGLAANQTGARCLE) the chain is Extracellular. Residue Asn29 is glycosylated (N-linked (GlcNAc...) asparagine). Residues 38-63 (VSVPDGLFLSLGLVSLVENVLVVTAI) form a helical membrane-spanning segment. Residues 64 to 72 (AKNRNLHSP) lie on the Cytoplasmic side of the membrane. A helical membrane pass occupies residues 73–93 (MYCFICCLALSDLLVSGSNML). Over 94–118 (ETAVTLLLEAGVLAARAAVVQQLDN) the chain is Extracellular. A helical transmembrane segment spans residues 119-140 (VIDVITCSSMLSSLCFLGAIAV). Topologically, residues 141–163 (DRYISIFYALRYHSIVTLPRARR) are cytoplasmic. Residues 164–183 (AVAAIWVASVLFSTLFIAYY) traverse the membrane as a helical segment. At 184-191 (DHAAVLLC) the chain is on the extracellular side. Residues 192–211 (LVIFFLAMLVLMAVLYVHML) form a helical membrane-spanning segment. At 212 to 240 (ARACQHAQGIARLHKRQRLAHQGFGLKGA) the chain is on the cytoplasmic side. A helical membrane pass occupies residues 241–266 (ATLTILLGIFFLCWGPFFLHLTLIVL). At 267-279 (CPQHPTCSCIFKN) the chain is on the extracellular side. The chain crosses the membrane as a helical span at residues 280-300 (FNLFLALIICNAIIDPLIYAF). The Cytoplasmic segment spans residues 301–317 (RSQELRRTLKEVLLCSW). The S-palmitoyl cysteine moiety is linked to residue Cys315.

It belongs to the G-protein coupled receptor 1 family. As to quaternary structure, interacts with MGRN1, but does not undergo MGRN1-mediated ubiquitination; this interaction competes with GNAS-binding and thus inhibits agonist-induced cAMP production. Interacts with OPN3; the interaction results in a decrease in MC1R-mediated cAMP signaling and ultimately a decrease in melanin production in melanocytes.

It localises to the cell membrane. Its function is as follows. Receptor for MSH (alpha, beta and gamma) and ACTH. The activity of this receptor is mediated by G proteins which activate adenylate cyclase. Mediates melanogenesis, the production of eumelanin (black/brown) and phaeomelanin (red/yellow), via regulation of cAMP signaling in melanocytes. This chain is Melanocyte-stimulating hormone receptor (MC1R), found in Papio anubis (Olive baboon).